A 561-amino-acid polypeptide reads, in one-letter code: Arginine--tRNA ligase (561 aa).

The short motif at 128 to 138 (ANPTGPLHVGH) is the 'HIGH' region element.

The protein belongs to the class-I aminoacyl-tRNA synthetase family. As to quaternary structure, monomer.

It is found in the cytoplasm. It carries out the reaction tRNA(Arg) + L-arginine + ATP = L-arginyl-tRNA(Arg) + AMP + diphosphate. This is Arginine--tRNA ligase from Marinobacter nauticus (strain ATCC 700491 / DSM 11845 / VT8) (Marinobacter aquaeolei).